Reading from the N-terminus, the 857-residue chain is Putative disease resistance protein At1g50180 (857 aa).

A coiled-coil region spans residues 27–60 (IGDQVKQLQDELKRLNCFLKDADEKQHESERVRN). An NB-ARC domain is found at 148–461 (SLREQRQSFP…AEGMVMPVKH (314 aa)). Residue 192–199 (GMGGLGKT) participates in ATP binding. 4 LRR repeats span residues 653 to 678 (MTSL…SLSK), 680 to 703 (LKRL…DVTQ), 754 to 780 (LPNL…NLEN), and 791 to 816 (MMRL…RFLK).

It belongs to the disease resistance NB-LRR family.

In terms of biological role, potential disease resistance protein. The protein is Putative disease resistance protein At1g50180 of Arabidopsis thaliana (Mouse-ear cress).